A 543-amino-acid chain; its full sequence is Ribonuclease Y (543 aa).

Residues 4–24 form a helical membrane-spanning segment; that stretch reads IIMIPVATAIVSLLVGTVIGY. One can recognise a KH domain in the interval 233–296; the sequence is TVSVVDLPNE…EIAKRAMERL (64 aa). The HD domain occupies 359–452; the sequence is VLSHSIEVGK…VVAADTISSA (94 aa).

The protein belongs to the RNase Y family.

It localises to the cell membrane. In terms of biological role, endoribonuclease that initiates mRNA decay. In Lactobacillus helveticus (strain DPC 4571), this protein is Ribonuclease Y.